The following is a 233-amino-acid chain: 5'-methylthioadenosine/S-adenosylhomocysteine nucleosidase (233 aa).

The Proton acceptor role is filled by E12. Substrate contacts are provided by residues G78, I152, and 173-174; that span reads ME. D197 (proton donor) is an active-site residue.

The protein belongs to the PNP/UDP phosphorylase family. MtnN subfamily. In terms of assembly, homodimer.

It carries out the reaction S-adenosyl-L-homocysteine + H2O = S-(5-deoxy-D-ribos-5-yl)-L-homocysteine + adenine. It catalyses the reaction S-methyl-5'-thioadenosine + H2O = 5-(methylsulfanyl)-D-ribose + adenine. The enzyme catalyses 5'-deoxyadenosine + H2O = 5-deoxy-D-ribose + adenine. Its pathway is amino-acid biosynthesis; L-methionine biosynthesis via salvage pathway; S-methyl-5-thio-alpha-D-ribose 1-phosphate from S-methyl-5'-thioadenosine (hydrolase route): step 1/2. In terms of biological role, catalyzes the irreversible cleavage of the glycosidic bond in both 5'-methylthioadenosine (MTA) and S-adenosylhomocysteine (SAH/AdoHcy) to adenine and the corresponding thioribose, 5'-methylthioribose and S-ribosylhomocysteine, respectively. Also cleaves 5'-deoxyadenosine, a toxic by-product of radical S-adenosylmethionine (SAM) enzymes, into 5-deoxyribose and adenine. Thus, is required for in vivo function of the radical SAM enzymes biotin synthase and lipoic acid synthase, that are inhibited by 5'-deoxyadenosine accumulation. The polypeptide is 5'-methylthioadenosine/S-adenosylhomocysteine nucleosidase (Yersinia enterocolitica serotype O:8 / biotype 1B (strain NCTC 13174 / 8081)).